A 347-amino-acid chain; its full sequence is NHL repeat-containing protein 3 (347 aa).

The first 22 residues, 1 to 22 (MARAWVCLAGAAFFLSCLVLHS), serve as a signal peptide directing secretion. One copy of the NHL 1 repeat lies at 47-93 (RLDLGWPKNSEYFTGATFCVAVDSLNGLVYVAQRGDNIPKVLVFSED). A glycan (N-linked (GlcNAc...) asparagine) is linked at Asn101. NHL repeat units lie at residues 150-196 (TPGK…LSQD) and 200-243 (LWLR…FDKD). N-linked (GlcNAc...) asparagine glycosylation is found at Asn206 and Asn278. The NHL 4 repeat unit spans residues 294–338 (GDCSVVSTIQLADQVLPHLLEVDRKTGAVYVAEIGAKQIQKYIPW).

The sequence is that of NHL repeat-containing protein 3 (Nhlrc3) from Mus musculus (Mouse).